Reading from the N-terminus, the 60-residue chain is Cytotoxin 6 (60 aa).

4 disulfides stabilise this stretch: Cys-3/Cys-21, Cys-14/Cys-38, Cys-42/Cys-53, and Cys-54/Cys-59.

The protein belongs to the three-finger toxin family. Short-chain subfamily. Type IA cytotoxin sub-subfamily. In terms of assembly, monomer in solution; Homodimer and oligomer in the presence of negatively charged lipids forming a pore with a size ranging between 20 and 30 Angstroms. Expressed by the venom gland.

The protein localises to the secreted. Its subcellular location is the target cell membrane. Its function is as follows. Shows cytolytic activity on many different cells by forming pore in lipid membranes. In vivo, increases heart rate or kills the animal by cardiac arrest. In addition, it binds to heparin with high affinity, interacts with Kv channel-interacting protein 1 (KCNIP1) in a calcium-independent manner, and binds to integrin alpha-V/beta-3 (ITGAV/ITGB3) with moderate affinity. In Naja annulifera (Banded Egyptian cobra), this protein is Cytotoxin 6.